Here is a 539-residue protein sequence, read N- to C-terminus: Chaperonin GroEL (539 aa).

ATP contacts are provided by residues 30–33, lysine 51, 87–91, glycine 415, and aspartate 495; these read TLGP and DGTTT.

The protein belongs to the chaperonin (HSP60) family. As to quaternary structure, forms a cylinder of 14 subunits composed of two heptameric rings stacked back-to-back. Interacts with the co-chaperonin GroES.

The protein localises to the cytoplasm. It catalyses the reaction ATP + H2O + a folded polypeptide = ADP + phosphate + an unfolded polypeptide.. In terms of biological role, together with its co-chaperonin GroES, plays an essential role in assisting protein folding. The GroEL-GroES system forms a nano-cage that allows encapsulation of the non-native substrate proteins and provides a physical environment optimized to promote and accelerate protein folding. The protein is Chaperonin GroEL of Serratia rubidaea (Serratia marinorubra).